The primary structure comprises 166 residues: Putative peroxisomal peroxiredoxin (166 aa).

The 162-residue stretch at 5–166 (FPEDVKFLYI…SGVDAVLAAL (162 aa)) folds into the Thioredoxin domain. Residue C56 is the Cysteine sulfenic acid (-SOH) intermediate of the active site.

It belongs to the peroxiredoxin family. Prx5 subfamily. Homodimer; disulfide-linked, upon oxidation.

It catalyses the reaction a hydroperoxide + [protein]-dithiol = [protein]-disulfide + an alcohol + H2O. In terms of biological role, thiol-specific peroxidase that catalyzes the reduction of hydrogen peroxide and organic hydroperoxides to water and alcohols, respectively. Plays a role in cell protection against oxidative stress by detoxifying peroxides and as sensor of hydrogen peroxide-mediated signaling events. The chain is Putative peroxisomal peroxiredoxin from Lipomyces kononenkoae (Yeast).